A 149-amino-acid chain; its full sequence is FKBP-type 16 kDa peptidyl-prolyl cis-trans isomerase (149 aa).

In terms of domain architecture, PPIase FKBP-type spans 2–72 (SESVQSNSAV…FSLEPDAAFG (71 aa)).

Belongs to the FKBP-type PPIase family.

The enzyme catalyses [protein]-peptidylproline (omega=180) = [protein]-peptidylproline (omega=0). PPIases accelerate the folding of proteins. Substrate specificity carried out with 'Suc-Ala-Xaa-Pro-Phe-4-nitroanilide', where Xaa is the amino acid tested, was found to be Phe &gt; Leu &gt;&gt; Ile &gt; Lys = Ala &gt; Trp &gt; His &gt;&gt; Gln. The polypeptide is FKBP-type 16 kDa peptidyl-prolyl cis-trans isomerase (fkpB) (Escherichia coli O6:H1 (strain CFT073 / ATCC 700928 / UPEC)).